Here is a 556-residue protein sequence, read N- to C-terminus: Polypeptide N-acetylgalactosaminyltransferase 13 (556 aa).

At 1–4 (MRRL) the chain is on the cytoplasmic side. The chain crosses the membrane as a helical; Signal-anchor for type II membrane protein span at residues 5–27 (VYCKVVLATSLMWVLVDVFLLLY). Topologically, residues 28-556 (FSECNKCDDK…WLLRNMTLGT (529 aa)) are lumenal. Residues Asn94 and Asn116 are each glycosylated (N-linked (GlcNAc...) asparagine). Cystine bridges form between Cys105-Cys338, Cys329-Cys407, Cys441-Cys458, Cys481-Cys496, and Cys522-Cys539. The interval 114-224 (LPNTSVVIVF…LGWLEPLLAR (111 aa)) is catalytic subdomain A. The substrate site is built by Asp155 and Arg185. 2 residues coordinate Mn(2+): Asp208 and His210. The segment at 284-346 (PVRTPTMAGG…TCSHVGHVFR (63 aa)) is catalytic subdomain B. Position 315 (Trp315) interacts with substrate. Position 343 (His343) interacts with Mn(2+). Residues Arg346 and Tyr351 each contribute to the substrate site. Residues 428–550 (YSLGEIRNVE…GSRSQQWLLR (123 aa)) enclose the Ricin B-type lectin domain. N-linked (GlcNAc...) asparagine glycosylation occurs at Asn551.

The protein belongs to the glycosyltransferase 2 family. GalNAc-T subfamily. Mn(2+) is required as a cofactor.

It is found in the golgi apparatus membrane. The catalysed reaction is L-seryl-[protein] + UDP-N-acetyl-alpha-D-galactosamine = a 3-O-[N-acetyl-alpha-D-galactosaminyl]-L-seryl-[protein] + UDP + H(+). The enzyme catalyses L-threonyl-[protein] + UDP-N-acetyl-alpha-D-galactosamine = a 3-O-[N-acetyl-alpha-D-galactosaminyl]-L-threonyl-[protein] + UDP + H(+). Its pathway is protein modification; protein glycosylation. In terms of biological role, catalyzes the initial reaction in O-linked oligosaccharide biosynthesis, the transfer of an N-acetyl-D-galactosamine (GalNAc) residue from UDP-GalNAc to a serine or threonine residue on the protein receptor. Generates GalNAc-O-Ser/Thr structure also known as Tn antigen, which itself is immunogenic but also serves as a precursor for the synthesis of different mucin-type O-glycan core structures. Contributes to the synthesis of O-linked glycans on mucins and proteoglycans of the central nervous system. Can glycosylate both unmodified peptides and glycopeptides that already contain an O-linked GalNAc sugar. Transfers GalNAc to Thr-/Ser-rich tandem repeats GTTPSPVPTTSTTSAP of MUC5AC. Transfers GalNAc to three consecutive serine/threonine residues on SDC3 forming a triplet-Tn epitope expressed in Purkinje cells of the developing brain. May promote neurogenesis through glycosylation and stabilization of PDPN. The polypeptide is Polypeptide N-acetylgalactosaminyltransferase 13 (Galnt13) (Rattus norvegicus (Rat)).